We begin with the raw amino-acid sequence, 603 residues long: Penicillin-binding protein activator LpoA (603 aa).

Positions 1–26 (MAMNHHQRRSVPRLLTPIALSIVLSA) are cleaved as a signal peptide. Cys27 carries N-palmitoyl cysteine lipidation. Cys27 is lipidated: S-diacylglycerol cysteine.

It belongs to the LpoA family. In terms of assembly, interacts with PBP1a.

The protein resides in the cell outer membrane. Its function is as follows. Regulator of peptidoglycan synthesis that is essential for the function of penicillin-binding protein 1A (PBP1a). The polypeptide is Penicillin-binding protein activator LpoA (Vibrio cholerae serotype O1 (strain ATCC 39541 / Classical Ogawa 395 / O395)).